The following is a 226-amino-acid chain: Orotidine 5'-phosphate decarboxylase (226 aa).

Substrate is bound by residues Asp8, Lys30, 58–67 (DLKLYDIPNT), Thr117, Arg177, Gln186, Gly206, and Arg207. The active-site Proton donor is the Lys60.

The protein belongs to the OMP decarboxylase family. Type 1 subfamily. Homodimer.

It carries out the reaction orotidine 5'-phosphate + H(+) = UMP + CO2. It participates in pyrimidine metabolism; UMP biosynthesis via de novo pathway; UMP from orotate: step 2/2. In terms of biological role, catalyzes the decarboxylation of orotidine 5'-monophosphate (OMP) to uridine 5'-monophosphate (UMP). In Campylobacter concisus (strain 13826), this protein is Orotidine 5'-phosphate decarboxylase.